A 309-amino-acid chain; its full sequence is Homoserine O-succinyltransferase (309 aa).

Cys142 functions as the Acyl-thioester intermediate in the catalytic mechanism. 2 residues coordinate substrate: Lys163 and Ser192. His235 serves as the catalytic Proton acceptor. The active site involves Glu237. A substrate-binding site is contributed by Arg249.

Belongs to the MetA family.

It localises to the cytoplasm. The catalysed reaction is L-homoserine + succinyl-CoA = O-succinyl-L-homoserine + CoA. It functions in the pathway amino-acid biosynthesis; L-methionine biosynthesis via de novo pathway; O-succinyl-L-homoserine from L-homoserine: step 1/1. Its function is as follows. Transfers a succinyl group from succinyl-CoA to L-homoserine, forming succinyl-L-homoserine. This is Homoserine O-succinyltransferase from Serratia proteamaculans (strain 568).